A 231-amino-acid polypeptide reads, in one-letter code: 5'-methylthioadenosine/S-adenosylhomocysteine nucleosidase (231 aa).

Glu12 functions as the Proton acceptor in the catalytic mechanism. Residues Gly78, Met153, and 174–175 (ME) each bind substrate. Asp198 acts as the Proton donor in catalysis.

The protein belongs to the PNP/UDP phosphorylase family. MtnN subfamily.

The catalysed reaction is S-adenosyl-L-homocysteine + H2O = S-(5-deoxy-D-ribos-5-yl)-L-homocysteine + adenine. It carries out the reaction S-methyl-5'-thioadenosine + H2O = 5-(methylsulfanyl)-D-ribose + adenine. The enzyme catalyses 5'-deoxyadenosine + H2O = 5-deoxy-D-ribose + adenine. The protein operates within amino-acid biosynthesis; L-methionine biosynthesis via salvage pathway; S-methyl-5-thio-alpha-D-ribose 1-phosphate from S-methyl-5'-thioadenosine (hydrolase route): step 1/2. Its function is as follows. Catalyzes the irreversible cleavage of the glycosidic bond in both 5'-methylthioadenosine (MTA) and S-adenosylhomocysteine (SAH/AdoHcy) to adenine and the corresponding thioribose, 5'-methylthioribose and S-ribosylhomocysteine, respectively. Also cleaves 5'-deoxyadenosine, a toxic by-product of radical S-adenosylmethionine (SAM) enzymes, into 5-deoxyribose and adenine. The chain is 5'-methylthioadenosine/S-adenosylhomocysteine nucleosidase from Bacillus subtilis (strain 168).